The chain runs to 1025 residues: Retrovirus-related Pol polyprotein from type-1 retrotransposable element R2 (1025 aa).

Polar residues predominate over residues 1-11 (NQIKKSNTSTG). The segment at 1 to 38 (NQIKKSNTSTGARIPKAMTNPADNFAGGQWKPPGRRSA) is disordered. Residues 46-69 (FVCEHCLRAFTTNTGRGLHIKRAH) form a C2H2-type zinc finger. Residues 146-158 (NRARETELTRLET) show a composition bias toward basic and acidic residues. A disordered region spans residues 146–172 (NRARETELTRLETADEDPASQEQDNPN). The region spanning 358–635 (MIMYHGQCPR…DQWKYLGVVY (278 aa)) is the Reverse transcriptase domain. Residues 755 to 1025 (SLLGGDWVAE…YRTERRRTAN (271 aa)) are nucleic acid-binding endonuclease.

It catalyses the reaction DNA(n) + a 2'-deoxyribonucleoside 5'-triphosphate = DNA(n+1) + diphosphate. The sequence is that of Retrovirus-related Pol polyprotein from type-1 retrotransposable element R2 from Nasonia vitripennis (Parasitic wasp).